A 754-amino-acid chain; its full sequence is Ribonucleoside-diphosphate reductase subunit alpha (754 aa).

In terms of domain architecture, ATP-cone spans 4–93; the sequence is INVIKSSGVS…MFALRKHVYG (90 aa). Residues threonine 206, 221–222, glycine 250, 435–439, and 615–619 contribute to the substrate site; these read SC, NLCCE, and PCESS. Cysteine 222 and cysteine 457 are oxidised to a cystine. The active-site Proton acceptor is the asparagine 435. Residue cysteine 437 is the Cysteine radical intermediate of the active site. The active-site Proton acceptor is the glutamate 439. Residues 621–641 form a disordered region; it reads QVSNSTNGYEPPRGPVSVKES.

It belongs to the ribonucleoside diphosphate reductase large chain family. In terms of assembly, heterodimer of a large and a small subunit.

The enzyme catalyses a 2'-deoxyribonucleoside 5'-diphosphate + [thioredoxin]-disulfide + H2O = a ribonucleoside 5'-diphosphate + [thioredoxin]-dithiol. Its activity is regulated as follows. Under complex allosteric control mediated by deoxynucleoside triphosphates and ATP binding. The type of nucleotide bound at the specificity site determines substrate preference. It seems probable that ATP makes the enzyme reduce CDP and UDP, dGTP favors ADP reduction and dTTP favors GDP reduction. Provides the precursors necessary for DNA synthesis. Catalyzes the biosynthesis of deoxyribonucleotides from the corresponding ribonucleotides. This chain is Ribonucleoside-diphosphate reductase subunit alpha (NRDA), found in Escherichia coli (Bacteriophage T4).